We begin with the raw amino-acid sequence, 261 residues long: 4-hydroxy-tetrahydrodipicolinate reductase (261 aa).

Residues 11–16 (GFMGAM), 96–98 (GTT), and 122–125 (APNF) contribute to the NAD(+) site. His152 acts as the Proton donor/acceptor in catalysis. His153 contributes to the (S)-2,3,4,5-tetrahydrodipicolinate binding site. The Proton donor role is filled by Lys156. A (S)-2,3,4,5-tetrahydrodipicolinate-binding site is contributed by 162 to 163 (GT).

The protein belongs to the DapB family.

The protein localises to the cytoplasm. It catalyses the reaction (S)-2,3,4,5-tetrahydrodipicolinate + NAD(+) + H2O = (2S,4S)-4-hydroxy-2,3,4,5-tetrahydrodipicolinate + NADH + H(+). The catalysed reaction is (S)-2,3,4,5-tetrahydrodipicolinate + NADP(+) + H2O = (2S,4S)-4-hydroxy-2,3,4,5-tetrahydrodipicolinate + NADPH + H(+). The protein operates within amino-acid biosynthesis; L-lysine biosynthesis via DAP pathway; (S)-tetrahydrodipicolinate from L-aspartate: step 4/4. Its function is as follows. Catalyzes the conversion of 4-hydroxy-tetrahydrodipicolinate (HTPA) to tetrahydrodipicolinate. This Lactobacillus helveticus (strain DPC 4571) protein is 4-hydroxy-tetrahydrodipicolinate reductase.